The primary structure comprises 397 residues: Transaldolase (397 aa).

Lys136 acts as the Schiff-base intermediate with substrate in catalysis.

The protein belongs to the transaldolase family. Type 1 subfamily. As to quaternary structure, homodimer.

Its subcellular location is the cytoplasm. The enzyme catalyses D-sedoheptulose 7-phosphate + D-glyceraldehyde 3-phosphate = D-erythrose 4-phosphate + beta-D-fructose 6-phosphate. The protein operates within carbohydrate degradation; pentose phosphate pathway; D-glyceraldehyde 3-phosphate and beta-D-fructose 6-phosphate from D-ribose 5-phosphate and D-xylulose 5-phosphate (non-oxidative stage): step 2/3. Transaldolase is important for the balance of metabolites in the pentose-phosphate pathway. In Synechococcus sp. (strain ATCC 27144 / PCC 6301 / SAUG 1402/1) (Anacystis nidulans), this protein is Transaldolase.